The primary structure comprises 361 residues: Dihydroorotate dehydrogenase (quinone) (361 aa).

FMN-binding positions include 69–73 and T93; that span reads AGFDK. K73 contributes to the substrate binding site. 118-122 serves as a coordination point for substrate; it reads NRLGF. FMN is bound by residues N147 and N180. N180 is a binding site for substrate. The Nucleophile role is filled by S183. N185 is a substrate binding site. 2 residues coordinate FMN: K221 and T249. 250–251 provides a ligand contact to substrate; sequence NT. Residues G271, G300, and 321-322 each bind FMN; that span reads YT.

This sequence belongs to the dihydroorotate dehydrogenase family. Type 2 subfamily. In terms of assembly, monomer. It depends on FMN as a cofactor.

It is found in the cell membrane. The enzyme catalyses (S)-dihydroorotate + a quinone = orotate + a quinol. It functions in the pathway pyrimidine metabolism; UMP biosynthesis via de novo pathway; orotate from (S)-dihydroorotate (quinone route): step 1/1. Functionally, catalyzes the conversion of dihydroorotate to orotate with quinone as electron acceptor. This is Dihydroorotate dehydrogenase (quinone) from Roseiflexus sp. (strain RS-1).